Here is a 441-residue protein sequence, read N- to C-terminus: Ribulose bisphosphate carboxylase large chain (441 aa).

Substrate-binding residues include asparagine 89 and threonine 139. Catalysis depends on lysine 141, which acts as the Proton acceptor. Lysine 143 provides a ligand contact to substrate. Residues lysine 167, aspartate 169, and glutamate 170 each contribute to the Mg(2+) site. N6-carboxylysine is present on lysine 167. Histidine 260 (proton acceptor) is an active-site residue. 3 residues coordinate substrate: arginine 261, histidine 293, and serine 345.

It belongs to the RuBisCO large chain family. Type I subfamily. In terms of assembly, heterohexadecamer of 8 large chains and 8 small chains; disulfide-linked. The disulfide link is formed within the large subunit homodimers. The cofactor is Mg(2+). The disulfide bond which can form in the large chain dimeric partners within the hexadecamer appears to be associated with oxidative stress and protein turnover.

It localises to the plastid. The protein localises to the chloroplast. It carries out the reaction 2 (2R)-3-phosphoglycerate + 2 H(+) = D-ribulose 1,5-bisphosphate + CO2 + H2O. The catalysed reaction is D-ribulose 1,5-bisphosphate + O2 = 2-phosphoglycolate + (2R)-3-phosphoglycerate + 2 H(+). In terms of biological role, ruBisCO catalyzes two reactions: the carboxylation of D-ribulose 1,5-bisphosphate, the primary event in carbon dioxide fixation, as well as the oxidative fragmentation of the pentose substrate in the photorespiration process. Both reactions occur simultaneously and in competition at the same active site. This Symphoricarpos albus (Common snowberry) protein is Ribulose bisphosphate carboxylase large chain.